Reading from the N-terminus, the 188-residue chain is MELLKQRILQDGRCYPGGILKVDSFINHQMDPMLMYKIAEEFIRRFQDRKINKIVTIEASGIAPAIMVGYIMQLPVVFVKKKKPKTMENMLSTVVHSFTKDRDYTVCISNNFLTPEDHILFIDDFLAYGNAAMGMVELAEQSGAVIEGMGFIIEKAFQDGGNLLREKGIRVESLAIIDNLDDCKITVR.

Xanthine is bound by residues Leu20 and Asn27. 127 to 131 provides a ligand contact to 5-phospho-alpha-D-ribose 1-diphosphate; it reads AYGNA. Lys155 lines the xanthine pocket.

This sequence belongs to the purine/pyrimidine phosphoribosyltransferase family. Xpt subfamily. As to quaternary structure, homodimer.

The protein localises to the cytoplasm. The enzyme catalyses XMP + diphosphate = xanthine + 5-phospho-alpha-D-ribose 1-diphosphate. It participates in purine metabolism; XMP biosynthesis via salvage pathway; XMP from xanthine: step 1/1. Its function is as follows. Converts the preformed base xanthine, a product of nucleic acid breakdown, to xanthosine 5'-monophosphate (XMP), so it can be reused for RNA or DNA synthesis. The chain is Xanthine phosphoribosyltransferase from Parabacteroides distasonis (strain ATCC 8503 / DSM 20701 / CIP 104284 / JCM 5825 / NCTC 11152).